The chain runs to 197 residues: Peptide deformylase (197 aa).

Fe cation-binding residues include C106 and H148. Residue E149 is part of the active site. A Fe cation-binding site is contributed by H152.

It belongs to the polypeptide deformylase family. It depends on Fe(2+) as a cofactor.

The enzyme catalyses N-terminal N-formyl-L-methionyl-[peptide] + H2O = N-terminal L-methionyl-[peptide] + formate. In terms of biological role, removes the formyl group from the N-terminal Met of newly synthesized proteins. Requires at least a dipeptide for an efficient rate of reaction. N-terminal L-methionine is a prerequisite for activity but the enzyme has broad specificity at other positions. The chain is Peptide deformylase from Mycolicibacterium vanbaalenii (strain DSM 7251 / JCM 13017 / BCRC 16820 / KCTC 9966 / NRRL B-24157 / PYR-1) (Mycobacterium vanbaalenii).